Here is a 300-residue protein sequence, read N- to C-terminus: Platelet-derived growth factor D (300 aa).

The CUB domain maps to 1-114; it reads QVTGNGHVQS…PGFKIYYSFV (114 aa). A disulfide bridge links C53 with C75. N-linked (GlcNAc...) asparagine glycosylation is present at N220.

Belongs to the PDGF/VEGF growth factor family. As to quaternary structure, homodimer; disulfide-linked. Interacts with PDGFRB homodimers, and with heterodimers formed by PDGFRA and PDGFRB. Activated by proteolytic cleavage. Proteolytic removal of the N-terminal CUB domain releasing the core domain is necessary for unmasking the receptor-binding epitopes of the core domain. Cleavage after Arg-191 or Arg-193 by urokinase plasminogen activator gives rise to the active form.

It is found in the secreted. Growth factor that plays an essential role in the regulation of embryonic development, cell proliferation, cell migration, survival and chemotaxis. Potent mitogen for cells of mesenchymal origin. Plays an important role in wound healing. Induces macrophage recruitment, increased interstitial pressure, and blood vessel maturation during angiogenesis. Can initiate events that lead to a mesangial proliferative glomerulonephritis, including influx of monocytes and macrophages and production of extracellular matrix. The polypeptide is Platelet-derived growth factor D (PDGFD) (Oryctolagus cuniculus (Rabbit)).